The following is a 216-amino-acid chain: Probable csgAB operon transcriptional regulatory protein (216 aa).

The HTH luxR-type domain maps to 149 to 214; that stretch reads NSTESALLTH…QAVSWANDNL (66 aa). Residues 173–192 constitute a DNA-binding region (H-T-H motif); sequence NNEIARSLFISENTVKTHLY.

The master regulator for adhesive curli fimbriae expression; necessary for transcription of the csgAB operon. Plays a positive role in biofilm formation. This chain is Probable csgAB operon transcriptional regulatory protein, found in Salmonella typhimurium (strain LT2 / SGSC1412 / ATCC 700720).